Reading from the N-terminus, the 280-residue chain is Probable formate transporter (280 aa).

Transmembrane regions (helical) follow at residues 33-49 (LSFVAGAYIAFGGLLAE), 67-83 (LVFGGVFPVGLMLVVIA), 116-133 (SWVFNLVGALFVAYVLAY), 177-195 (FWRAIGCNWLVCLAVYLAV), 204-219 (SFGIWFPIMAFVCIGF), and 253-272 (LGNIVGGAIFVGCIYWFTYL).

The protein belongs to the FNT transporter (TC 1.A.16) family.

It localises to the cell membrane. May act as a formate transporter. The polypeptide is Probable formate transporter (fdhC) (Methanobacterium formicicum).